A 239-amino-acid chain; its full sequence is Pyridoxine 5'-phosphate synthase (239 aa).

3-amino-2-oxopropyl phosphate is bound at residue N9. 11–12 contributes to the 1-deoxy-D-xylulose 5-phosphate binding site; the sequence is DH. Position 20 (R20) interacts with 3-amino-2-oxopropyl phosphate. The Proton acceptor role is filled by H45. The 1-deoxy-D-xylulose 5-phosphate site is built by R47 and H52. Catalysis depends on E72, which acts as the Proton acceptor. A 1-deoxy-D-xylulose 5-phosphate-binding site is contributed by T102. H189 (proton donor) is an active-site residue. Residues G190 and 211–212 each bind 3-amino-2-oxopropyl phosphate; that span reads GH.

It belongs to the PNP synthase family. As to quaternary structure, homooctamer; tetramer of dimers.

The protein localises to the cytoplasm. It carries out the reaction 3-amino-2-oxopropyl phosphate + 1-deoxy-D-xylulose 5-phosphate = pyridoxine 5'-phosphate + phosphate + 2 H2O + H(+). It participates in cofactor biosynthesis; pyridoxine 5'-phosphate biosynthesis; pyridoxine 5'-phosphate from D-erythrose 4-phosphate: step 5/5. Catalyzes the complicated ring closure reaction between the two acyclic compounds 1-deoxy-D-xylulose-5-phosphate (DXP) and 3-amino-2-oxopropyl phosphate (1-amino-acetone-3-phosphate or AAP) to form pyridoxine 5'-phosphate (PNP) and inorganic phosphate. The polypeptide is Pyridoxine 5'-phosphate synthase (Ehrlichia chaffeensis (strain ATCC CRL-10679 / Arkansas)).